A 919-amino-acid polypeptide reads, in one-letter code: Leucine--tRNA ligase (919 aa).

A 'HIGH' region motif is present at residues 83–93; the sequence is PYPSGKLHMGH. Residues 670 to 674 carry the 'KMSKS' region motif; sequence KMSKS. Position 673 (lysine 673) interacts with ATP.

This sequence belongs to the class-I aminoacyl-tRNA synthetase family.

The protein resides in the cytoplasm. The enzyme catalyses tRNA(Leu) + L-leucine + ATP = L-leucyl-tRNA(Leu) + AMP + diphosphate. In Psychrobacter cryohalolentis (strain ATCC BAA-1226 / DSM 17306 / VKM B-2378 / K5), this protein is Leucine--tRNA ligase.